We begin with the raw amino-acid sequence, 150 residues long: Altered inheritance of mitochondria protein 11 (150 aa).

The next 2 helical transmembrane spans lie at M28–F45 and L77–W99.

The protein belongs to the AIM11 family.

It is found in the membrane. This is Altered inheritance of mitochondria protein 11 (AIM11) from Kluyveromyces lactis (strain ATCC 8585 / CBS 2359 / DSM 70799 / NBRC 1267 / NRRL Y-1140 / WM37) (Yeast).